A 734-amino-acid polypeptide reads, in one-letter code: Photosystem I P700 chlorophyll a apoprotein A2 (734 aa).

Helical transmembrane passes span 46 to 69 (IFASHFGQLAIIFLWTSGNLFHVA), 135 to 158 (LYTGALFLLCLSAISLIAGWLHLQ), 175 to 199 (LNHHLSGLFGVSSLAWAGHLVHVAI), 273 to 291 (IAHHHLAIAFLFLVAGHMY), 330 to 353 (IHFQLGLALASLGVITSLVAQHMY), 369 to 395 (AALYTHHQYIAGFIMTGAFAHGAIFFI), 417 to 439 (AIISHLSWASLFLGFHTLGLYVH), and 517 to 535 (FLVHHAIALGLHTTTLILV). [4Fe-4S] cluster-binding residues include Cys-559 and Cys-568. The next 2 helical transmembrane spans lie at 575–596 (AFYLAVFWMLNTIGWVTFYWHW) and 643–665 (LSVWAWMFLFGHLVWATGFMFLI). 3 residues coordinate chlorophyll a: His-654, Met-662, and Tyr-670. Trp-671 lines the phylloquinone pocket. Residues 707–727 (LVGLAHFSVGYIFTYAAFLIA) traverse the membrane as a helical segment.

Belongs to the PsaA/PsaB family. The PsaA/B heterodimer binds the P700 chlorophyll special pair and subsequent electron acceptors. PSI consists of a core antenna complex that captures photons, and an electron transfer chain that converts photonic excitation into a charge separation. The eukaryotic PSI reaction center is composed of at least 11 subunits. P700 is a chlorophyll a/chlorophyll a' dimer, A0 is one or more chlorophyll a, A1 is one or both phylloquinones and FX is a shared 4Fe-4S iron-sulfur center. serves as cofactor.

Its subcellular location is the plastid. It localises to the chloroplast thylakoid membrane. The catalysed reaction is reduced [plastocyanin] + hnu + oxidized [2Fe-2S]-[ferredoxin] = oxidized [plastocyanin] + reduced [2Fe-2S]-[ferredoxin]. Functionally, psaA and PsaB bind P700, the primary electron donor of photosystem I (PSI), as well as the electron acceptors A0, A1 and FX. PSI is a plastocyanin-ferredoxin oxidoreductase, converting photonic excitation into a charge separation, which transfers an electron from the donor P700 chlorophyll pair to the spectroscopically characterized acceptors A0, A1, FX, FA and FB in turn. Oxidized P700 is reduced on the lumenal side of the thylakoid membrane by plastocyanin. The protein is Photosystem I P700 chlorophyll a apoprotein A2 of Dioscorea elephantipes (Elephant's foot yam).